We begin with the raw amino-acid sequence, 1728 residues long: U3 small nucleolar RNA-associated protein 10 (1728 aa).

HEAT repeat units lie at residues 540–578, 881–926, 986–1024, 1191–1229, 1235–1274, 1622–1662, and 1683–1721; these read DKDF…LVKE, PANH…MMPA, FMGS…AYEH, LLSI…SEST, REAL…KYGK, ADAT…GQAA, and LQAL…KLGE.

It belongs to the HEATR1/UTP10 family. In terms of assembly, component of the ribosomal small subunit (SSU) processome.

It is found in the nucleus. The protein localises to the nucleolus. In terms of biological role, involved in nucleolar processing of pre-18S ribosomal RNA. Involved in ribosome biosynthesis. In Chaetomium globosum (strain ATCC 6205 / CBS 148.51 / DSM 1962 / NBRC 6347 / NRRL 1970) (Soil fungus), this protein is U3 small nucleolar RNA-associated protein 10.